A 417-amino-acid polypeptide reads, in one-letter code: Phosphoribosylamine--glycine ligase (417 aa).

The ATP-grasp domain occupies 107 to 313 (KQIMAKYEIP…FLEIIEATLE (207 aa)). 133–194 (LKETWYPVVI…EEMLYGKEAS (62 aa)) is an ATP binding site. Residues glutamate 283 and asparagine 285 each contribute to the Mg(2+) site.

The protein belongs to the GARS family. It depends on Mg(2+) as a cofactor. Requires Mn(2+) as cofactor.

The catalysed reaction is 5-phospho-beta-D-ribosylamine + glycine + ATP = N(1)-(5-phospho-beta-D-ribosyl)glycinamide + ADP + phosphate + H(+). It participates in purine metabolism; IMP biosynthesis via de novo pathway; N(1)-(5-phospho-D-ribosyl)glycinamide from 5-phospho-alpha-D-ribose 1-diphosphate: step 2/2. The chain is Phosphoribosylamine--glycine ligase from Caldanaerobacter subterraneus subsp. tengcongensis (strain DSM 15242 / JCM 11007 / NBRC 100824 / MB4) (Thermoanaerobacter tengcongensis).